Consider the following 889-residue polypeptide: Translation initiation factor IF-2 (889 aa).

The span at 115-236 shows a compositional bias: basic and acidic residues; it reads EAEAQAKAEA…EAERYSDHHI (122 aa). The interval 115-293 is disordered; the sequence is EAEAQAKAEA…RNRSTAPESM (179 aa). The segment covering 257 to 270 has biased composition (basic residues); it reads GRRARNKNTAKTKR. The segment covering 271 to 280 has biased composition (basic and acidic residues); that stretch reads GGKDARDGRE. One can recognise a tr-type G domain in the interval 389–558; it reads PRAPVVTIMG…LLQAEVLELK (170 aa). Residues 398–405 are G1; that stretch reads GHVDHGKT. Residue 398–405 coordinates GTP; that stretch reads GHVDHGKT. Residues 423-427 form a G2 region; it reads GITQH. Residues 444–447 are G3; it reads DTPG. GTP-binding positions include 444 to 448 and 498 to 501; these read DTPGH and NKMD. Residues 498 to 501 form a G4 region; sequence NKMD. Residues 534-536 are G5; that stretch reads SAK.

It belongs to the TRAFAC class translation factor GTPase superfamily. Classic translation factor GTPase family. IF-2 subfamily.

It localises to the cytoplasm. One of the essential components for the initiation of protein synthesis. Protects formylmethionyl-tRNA from spontaneous hydrolysis and promotes its binding to the 30S ribosomal subunits. Also involved in the hydrolysis of GTP during the formation of the 70S ribosomal complex. This Shewanella sp. (strain ANA-3) protein is Translation initiation factor IF-2.